A 218-amino-acid polypeptide reads, in one-letter code: Tubulin polymerization-promoting protein (218 aa).

The interval 1-46 is disordered; the sequence is MADSKAKPAKAANKTPPKSPGDPARAAKRLSLESEGANEGATAAPE. The segment at 1-115 is mediates interaction with LIMK1; sequence MADSKAKPAK…SCRTITFEQF (115 aa). T15 is modified (phosphothreonine). Phosphoserine is present on residues S19, S31, and S34. At T42 the chain carries Phosphothreonine. Positions 60, 71, 79, and 82 each coordinate Zn(2+). Position 91 is a phosphothreonine (T91). At S106 the chain carries Phosphoserine. A glycan (O-linked (GlcNAc) serine) is linked at S151. Phosphoserine occurs at positions 158 and 159. Positions 166–192 are disordered; it reads TDTSKFTGSHKERFDQSGKGKGKAGRV. Positions 174 to 183 are enriched in basic and acidic residues; sequence SHKERFDQSG.

The protein belongs to the TPPP family. As to quaternary structure, homodimer. Binds tubulin; binding is inhibited by GTP. Interacts with MAPK1. Interacts with GAPDH; the interaction is direct. Interacts with LIMK1 (via the PDZ domain); the interaction is direct. Interacts with LIMK2. Interacts with HDAC6; thereby inhibiting the tubulin deacetylase activity of HDAC6. Interacts with aggregated SNCA; may have a pro-aggregatory role in synucleinopathies. Interacts with DYNLL1. Interacts (via C-terminus) with S100A2, S100A6 and S100B; these interactions inhibit TPPP dimerization. Mg(2+) serves as cofactor. Post-translationally, phosphorylated by LIMK1 on serine residues; phosphorylation may alter the tubulin polymerization activity. Phosphorylation by LIMK2, but not LIMK1, regulates astral microtubule organization at early stage of mitosis. Phosphorylation by ROCK1 at Ser-31, Ser-106 and Ser-158 inhibits interaction with HDAC6, resulting in decreased acetylation of tubulin, increased cell motility and entry into S-phase. Phosphorylation by CDK1 inhibits the microtubule polymerizing activity. In terms of processing, degraded by the proteasome; zinc-binding inhibits degradation by the proteasome. In terms of tissue distribution, widely expressed with higher expression in brain (at protein level).

It localises to the golgi outpost. Its subcellular location is the cytoplasm. The protein localises to the cytoskeleton. The protein resides in the microtubule organizing center. It is found in the nucleus. It localises to the spindle. It carries out the reaction GTP + H2O = GDP + phosphate + H(+). Regulator of microtubule dynamics that plays a key role in myelination by promoting elongation of the myelin sheath. Acts as a microtubule nucleation factor in oligodendrocytes: specifically localizes to the postsynaptic Golgi apparatus region, also named Golgi outpost, and promotes microtubule nucleation, an important step for elongation of the myelin sheath. Required for both uniform polarized growth of distal microtubules as well as directing the branching of proximal processes. Shows magnesium-dependent GTPase activity; the role of the GTPase activity is unclear. In addition to microtubule nucleation activity, also involved in microtubule bundling and stabilization of existing microtubules, thereby maintaining the integrity of the microtubule network. Regulates microtubule dynamics by promoting tubulin acetylation: acts by inhibiting the tubulin deacetylase activity of HDAC6. Also regulates cell migration: phosphorylation by ROCK1 inhibits interaction with HDAC6, resulting in decreased acetylation of tubulin and increased cell motility. Plays a role in cell proliferation by regulating the G1/S-phase transition. Involved in astral microtubule organization and mitotic spindle orientation during early stage of mitosis; this process is regulated by phosphorylation by LIMK2. This is Tubulin polymerization-promoting protein from Mus musculus (Mouse).